The primary structure comprises 372 residues: Cytochrome b (372 aa).

Helical transmembrane passes span phenylalanine 29–tryptophan 49, tryptophan 73–leucine 95, valine 108–valine 128, and phenylalanine 174–isoleucine 194. Heme b is bound by residues histidine 79 and histidine 93. 2 residues coordinate heme b: histidine 178 and histidine 192. Histidine 197 lines the a ubiquinone pocket. A run of 4 helical transmembrane segments spans residues phenylalanine 220 to phenylalanine 240, leucine 284 to glycine 301, methionine 311 to glycine 336, and aspartate 344 to leucine 363.

Belongs to the cytochrome b family. In terms of assembly, the main subunits of complex b-c1 are: cytochrome b, cytochrome c1 and the Rieske protein. Heme b serves as cofactor.

The protein localises to the mitochondrion inner membrane. Component of the ubiquinol-cytochrome c reductase complex (complex III or cytochrome b-c1 complex) that is part of the mitochondrial respiratory chain. The b-c1 complex mediates electron transfer from ubiquinol to cytochrome c. Contributes to the generation of a proton gradient across the mitochondrial membrane that is then used for ATP synthesis. This is Cytochrome b (mt:Cyt-b) from Leptorhynchoides thecatus (Thorny-headed worm).